The primary structure comprises 289 residues: Inorganic pyrophosphatase (289 aa).

Serine 2 bears the N-acetylserine mark. Lysine 57 carries the N6-acetyllysine modification. Aspartate 116, aspartate 121, and aspartate 153 together coordinate Mg(2+). Position 228 is an N6-acetyllysine (lysine 228). Residue serine 250 is modified to Phosphoserine.

Belongs to the PPase family. As to quaternary structure, homodimer. Mg(2+) is required as a cofactor.

The protein resides in the cytoplasm. It carries out the reaction diphosphate + H2O = 2 phosphate + H(+). The chain is Inorganic pyrophosphatase (Ppa1) from Mus musculus (Mouse).